The chain runs to 275 residues: Probable CCR4-associated factor 1 homolog 7 (275 aa).

A divalent metal cation is bound by residues Asp-40, Glu-42, Asp-167, and Asp-236.

Belongs to the CAF1 family. In terms of assembly, component of the CCR4-NOT complex, at least composed of CRR4 and CAF1 proteins. A divalent metal cation is required as a cofactor.

It is found in the nucleus. Its subcellular location is the cytoplasm. The enzyme catalyses Exonucleolytic cleavage of poly(A) to 5'-AMP.. Functionally, ubiquitous transcription factor required for a diverse set of processes. It is a component of the CCR4 complex involved in the control of gene expression. This Arabidopsis thaliana (Mouse-ear cress) protein is Probable CCR4-associated factor 1 homolog 7 (CAF1-7).